The primary structure comprises 456 residues: tRNA modification GTPase MnmE (456 aa).

(6S)-5-formyl-5,6,7,8-tetrahydrofolate is bound by residues Arg24, Glu81, and Lys120. Residues 216–379 form the TrmE-type G domain; the sequence is GMTVVIAGRP…LREHLKACMG (164 aa). Asn226 lines the K(+) pocket. GTP contacts are provided by residues 226 to 231, 245 to 251, 270 to 273, 335 to 338, and 359 to 361; these read NAGKSS, TEIAGTT, DTAG, NKAD, and SAR. Ser230 serves as a coordination point for Mg(2+). Residues Thr245, Ile247, and Thr250 each contribute to the K(+) site. Residue Thr251 participates in Mg(2+) binding. Lys456 contacts (6S)-5-formyl-5,6,7,8-tetrahydrofolate.

It belongs to the TRAFAC class TrmE-Era-EngA-EngB-Septin-like GTPase superfamily. TrmE GTPase family. Homodimer. Heterotetramer of two MnmE and two MnmG subunits. K(+) serves as cofactor.

The protein localises to the cytoplasm. Functionally, exhibits a very high intrinsic GTPase hydrolysis rate. Involved in the addition of a carboxymethylaminomethyl (cmnm) group at the wobble position (U34) of certain tRNAs, forming tRNA-cmnm(5)s(2)U34. The polypeptide is tRNA modification GTPase MnmE (Pseudomonas syringae pv. tomato (strain ATCC BAA-871 / DC3000)).